Consider the following 346-residue polypeptide: Probable RNA methyltransferase PSPA7_3453 (346 aa).

Glu91 (proton acceptor) is an active-site residue. One can recognise a Radical SAM core domain in the interval 94–320 (LLPRGGLCVS…TKVRNSAGQD (227 aa)). Cys101 and Cys325 are joined by a disulfide. [4Fe-4S] cluster is bound by residues Cys108, Cys112, and Cys115. S-adenosyl-L-methionine contacts are provided by residues 153-154 (GE), Ser183, 206-208 (SLH), and Asn282. The active-site S-methylcysteine intermediate is Cys325.

Belongs to the radical SAM superfamily. RlmN family. The cofactor is [4Fe-4S] cluster.

It localises to the cytoplasm. The chain is Probable RNA methyltransferase PSPA7_3453 from Pseudomonas paraeruginosa (strain DSM 24068 / PA7) (Pseudomonas aeruginosa (strain PA7)).